A 140-amino-acid polypeptide reads, in one-letter code: Putative pre-16S rRNA nuclease (140 aa).

This sequence belongs to the YqgF nuclease family.

It is found in the cytoplasm. Its function is as follows. Could be a nuclease involved in processing of the 5'-end of pre-16S rRNA. The sequence is that of Putative pre-16S rRNA nuclease from Vibrio vulnificus (strain YJ016).